Reading from the N-terminus, the 159-residue chain is Prs ADP-ribosylating antitoxin (159 aa).

The tract at residues 99-159 is sufficient to neutralize toxin; it reads EDMVEESGET…LAQIQSGAFA (61 aa).

The protein belongs to the MbcA/ParS/Xre antitoxin family. Forms heterotetrameric ParS(2)-ParT(2) complexes. The 2 antitoxin fragments do not make contact in the crystal structure.

Its function is as follows. Antitoxin component of a type II toxin-antitoxin (TA) system. Neutralizes the bacteriostatic effect of cognate toxin ParT by inserting into its active site. The sequence is that of Prs ADP-ribosylating antitoxin from Sphingobium sp. (strain YBL2).